Reading from the N-terminus, the 566-residue chain is Putative lipase ATG15 (566 aa).

The Cytoplasmic portion of the chain corresponds to 1–17 (MGSKHKKNASKSLRAFS). A helical; Signal-anchor for type II membrane protein transmembrane segment spans residues 18-38 (FIILSASIALVYIFNPVKLIF). At 39–566 (PSSIIRFHHG…CVEWGDEEDA (528 aa)) the chain is on the lumenal side. Asn264 and Asn348 each carry an N-linked (GlcNAc...) asparagine glycan. Residue Ser366 is the Charge relay system of the active site. Asn483 carries an N-linked (GlcNAc...) asparagine glycan. The tract at residues 507 to 545 (DSLDDEPPLPNPLRPGKPSTTSSSQHHTSTTTTTETSRP) is disordered. Residues 522-543 (GKPSTTSSSQHHTSTTTTTETS) show a composition bias toward low complexity.

It belongs to the AB hydrolase superfamily. Lipase family. Binds to both phosphatidylinositol (PI) and phosphatidylinositol 3,5-bisphosphate (PIP2).

It localises to the endosome. The protein resides in the multivesicular body membrane. It is found in the prevacuolar compartment membrane. The enzyme catalyses a triacylglycerol + H2O = a diacylglycerol + a fatty acid + H(+). Lipase which is essential for lysis of subvacuolar cytoplasm to vacuole targeted bodies and intravacuolar autophagic bodies. Involved in the lysis of intravacuolar multivesicular body (MVB) vesicles. The intravacuolar membrane disintegration by ATG15 is critical to life span extension. This Meyerozyma guilliermondii (strain ATCC 6260 / CBS 566 / DSM 6381 / JCM 1539 / NBRC 10279 / NRRL Y-324) (Yeast) protein is Putative lipase ATG15 (ATG15).